A 204-amino-acid chain; its full sequence is Tic20 family protein Ycf60 (204 aa).

The next 4 membrane-spanning stretches (helical) occupy residues 5–25 (LPSL…SFII), 87–107 (LMPL…IFFI), 133–153 (ILLF…PIEF), and 159–179 (GLMM…YSII).

This sequence belongs to the Tic20 family.

It localises to the plastid. The protein resides in the chloroplast membrane. This is Tic20 family protein Ycf60 (ycf60) from Gracilaria tenuistipitata var. liui (Red alga).